Here is a 1375-residue protein sequence, read N- to C-terminus: DNA-directed RNA polymerase subunit beta (1375 aa).

This sequence belongs to the RNA polymerase beta chain family. In terms of assembly, the RNAP catalytic core consists of 2 alpha, 1 beta, 1 beta' and 1 omega subunit. When a sigma factor is associated with the core the holoenzyme is formed, which can initiate transcription.

The enzyme catalyses RNA(n) + a ribonucleoside 5'-triphosphate = RNA(n+1) + diphosphate. In terms of biological role, DNA-dependent RNA polymerase catalyzes the transcription of DNA into RNA using the four ribonucleoside triphosphates as substrates. This is DNA-directed RNA polymerase subunit beta from Oleidesulfovibrio alaskensis (strain ATCC BAA-1058 / DSM 17464 / G20) (Desulfovibrio alaskensis).